Here is a 575-residue protein sequence, read N- to C-terminus: Adenine deaminase (575 aa).

This sequence belongs to the metallo-dependent hydrolases superfamily. Adenine deaminase family. Mn(2+) is required as a cofactor.

It carries out the reaction adenine + H2O + H(+) = hypoxanthine + NH4(+). The chain is Adenine deaminase from Nitratidesulfovibrio vulgaris (strain ATCC 29579 / DSM 644 / CCUG 34227 / NCIMB 8303 / VKM B-1760 / Hildenborough) (Desulfovibrio vulgaris).